The primary structure comprises 279 residues: DegV domain-containing protein M6_Spy1246 (279 aa).

The DegV domain maps to 4-278 (IKIVTDSSIT…EGAFAVMVRY (275 aa)). Thr-62 and Ser-95 together coordinate hexadecanoate.

Its function is as follows. May bind long-chain fatty acids, such as palmitate, and may play a role in lipid transport or fatty acid metabolism. This Streptococcus pyogenes serotype M6 (strain ATCC BAA-946 / MGAS10394) protein is DegV domain-containing protein M6_Spy1246.